The sequence spans 375 residues: Alcohol dehydrogenase B (375 aa).

7 residues coordinate Zn(2+): Cys40, His62, Cys92, Cys95, Cys98, Cys106, and Cys169.

The protein belongs to the zinc-containing alcohol dehydrogenase family. Zn(2+) serves as cofactor.

It localises to the cytoplasm. It carries out the reaction a primary alcohol + NAD(+) = an aldehyde + NADH + H(+). The enzyme catalyses a secondary alcohol + NAD(+) = a ketone + NADH + H(+). The chain is Alcohol dehydrogenase B (adhB) from Mycobacterium bovis (strain ATCC BAA-935 / AF2122/97).